We begin with the raw amino-acid sequence, 155 residues long: Small ribosomal subunit protein uS7cz/uS7cy (155 aa).

The protein belongs to the universal ribosomal protein uS7 family. In terms of assembly, part of the 30S ribosomal subunit.

The protein localises to the plastid. It localises to the chloroplast. In terms of biological role, one of the primary rRNA binding proteins, it binds directly to 16S rRNA where it nucleates assembly of the head domain of the 30S subunit. The polypeptide is Small ribosomal subunit protein uS7cz/uS7cy (rps7-A) (Jasminum nudiflorum (Winter jasmine)).